Consider the following 511-residue polypeptide: Rab proteins geranylgeranyltransferase component A (511 aa).

It belongs to the Rab GDI family.

The protein resides in the cytoplasm. It is found in the perinuclear region. The protein localises to the cytoskeleton. It localises to the spindle pole. Its function is as follows. Binds unprenylated Rab proteins, presents it to the catalytic component B, and remains bound to it after the geranylgeranyl transfer reaction. The component A is thought to be regenerated by transferring its prenylated Rab to a protein acceptor. This chain is Rab proteins geranylgeranyltransferase component A, found in Drosophila melanogaster (Fruit fly).